The primary structure comprises 358 residues: S-adenosylmethionine:tRNA ribosyltransferase-isomerase (358 aa).

It belongs to the QueA family. Monomer.

It localises to the cytoplasm. The catalysed reaction is 7-aminomethyl-7-carbaguanosine(34) in tRNA + S-adenosyl-L-methionine = epoxyqueuosine(34) in tRNA + adenine + L-methionine + 2 H(+). It participates in tRNA modification; tRNA-queuosine biosynthesis. Transfers and isomerizes the ribose moiety from AdoMet to the 7-aminomethyl group of 7-deazaguanine (preQ1-tRNA) to give epoxyqueuosine (oQ-tRNA). The polypeptide is S-adenosylmethionine:tRNA ribosyltransferase-isomerase (Chelativorans sp. (strain BNC1)).